A 99-amino-acid chain; its full sequence is NADH dehydrogenase [ubiquinone] 1 alpha subcomplex subunit 2 (99 aa).

The residue at position 2 (Ala-2) is an N-acetylalanine. A disulfide bond links Cys-24 and Cys-58. Lys-64 is subject to N6-acetyllysine; alternate. An N6-succinyllysine; alternate modification is found at Lys-64. The residue at position 75 (Lys-75) is an N6-acetyllysine.

Belongs to the complex I NDUFA2 subunit family. In terms of assembly, complex I is composed of 45 different subunits.

The protein resides in the mitochondrion inner membrane. Its function is as follows. Accessory subunit of the mitochondrial membrane respiratory chain NADH dehydrogenase (Complex I), that is believed not to be involved in catalysis. Complex I functions in the transfer of electrons from NADH to the respiratory chain. The immediate electron acceptor for the enzyme is believed to be ubiquinone. This Bos taurus (Bovine) protein is NADH dehydrogenase [ubiquinone] 1 alpha subcomplex subunit 2 (NDUFA2).